A 150-amino-acid chain; its full sequence is 3-dehydroquinate dehydratase (150 aa).

The active-site Proton acceptor is the tyrosine 26. Residues asparagine 77, histidine 83, and aspartate 90 each coordinate substrate. Catalysis depends on histidine 103, which acts as the Proton donor. Substrate is bound by residues 104–105 and arginine 114; that span reads LS.

This sequence belongs to the type-II 3-dehydroquinase family. Homododecamer.

The catalysed reaction is 3-dehydroquinate = 3-dehydroshikimate + H2O. The protein operates within metabolic intermediate biosynthesis; chorismate biosynthesis; chorismate from D-erythrose 4-phosphate and phosphoenolpyruvate: step 3/7. Its function is as follows. Catalyzes a trans-dehydration via an enolate intermediate. In Sodalis glossinidius (strain morsitans), this protein is 3-dehydroquinate dehydratase.